The chain runs to 240 residues: Mitochondrial transcription rescue factor 1 (240 aa).

Residues 1–84 (MAMASVKLLA…ECIFPFSVRL (84 aa)) constitute a mitochondrion transit peptide. A disordered region spans residues 95–127 (KKSLQKVDEEDSDEESHHDEMSEQEEELEDDPT). 2 positions are modified to phosphoserine: Ser106 and Ser116. Acidic residues predominate over residues 116–126 (SEQEEELEDDP). The S4 RNA-binding domain occupies 142 to 217 (FRYDVVLKTG…LKKVFEEKTE (76 aa)).

In terms of assembly, monomer. Interacts with POLRMT. Interacts (via S4 domain) with MTRFR (via C-terminus). Associates with mitoribosomal S39 large subunit, peptidyl tRNA and nascent chain.

It is found in the mitochondrion matrix. In terms of biological role, mitochondrial RNA-binding protein involved in mitochondrial transcription regulation. Functions as a protective factor to maintain proper mitochondrial RNA level during stress. Acts at the transcription level and its protective function depends on its RNA binding ability. Part of a mitoribosome-associated quality control pathway that prevents aberrant translation by responding to interruptions during elongation. As heterodimer with MTRF, ejects the unfinished nascent chain and peptidyl transfer RNA (tRNA), respectively, from stalled ribosomes. Recruitment of mitoribosome biogenesis factors to these quality control intermediates suggests additional roles for MTRES1 and MTRF during mitoribosome rescue. This is Mitochondrial transcription rescue factor 1 from Homo sapiens (Human).